Consider the following 450-residue polypeptide: Protein DA1-related 3 (450 aa).

Residues 1 to 46 adopt a coiled-coil conformation; the sequence is MVRRKRQEEDEKIEIERVKEESLKLAKQAEEKRRLEESKEQGKRIQ. 2 stretches are compositionally biased toward basic and acidic residues: residues 27-47 and 56-69; these read KQAE…RIQV and TSKD…SKDV. Residues 27–87 form a disordered region; that stretch reads KQAEEKRRLE…PSIDGKSEIG (61 aa).

The polypeptide is Protein DA1-related 3 (DAR3) (Arabidopsis thaliana (Mouse-ear cress)).